Consider the following 220-residue polypeptide: Protein GrpE (220 aa).

It belongs to the GrpE family. As to quaternary structure, homodimer.

The protein localises to the cytoplasm. In terms of biological role, participates actively in the response to hyperosmotic and heat shock by preventing the aggregation of stress-denatured proteins, in association with DnaK and GrpE. It is the nucleotide exchange factor for DnaK and may function as a thermosensor. Unfolded proteins bind initially to DnaJ; upon interaction with the DnaJ-bound protein, DnaK hydrolyzes its bound ATP, resulting in the formation of a stable complex. GrpE releases ADP from DnaK; ATP binding to DnaK triggers the release of the substrate protein, thus completing the reaction cycle. Several rounds of ATP-dependent interactions between DnaJ, DnaK and GrpE are required for fully efficient folding. The chain is Protein GrpE from Bartonella quintana (strain Toulouse) (Rochalimaea quintana).